Here is a 631-residue protein sequence, read N- to C-terminus: Methanol dehydrogenase [cytochrome c] subunit 1 (631 aa).

The signal sequence occupies residues 1-32 (MNRNTPKARGASSLAMAVAMGLAVLTTAPATA). Cysteines 135 and 136 form a disulfide. 2 residues coordinate Ca(2+): glutamate 209 and asparagine 293. Aspartate 335 acts as the Proton acceptor in catalysis. Cysteine 418 and cysteine 447 are joined by a disulfide.

The protein belongs to the bacterial PQQ dehydrogenase family. In terms of assembly, heterotetramer composed of 2 alpha and 2 beta subunits. Pyrroloquinoline quinone is required as a cofactor. The cofactor is Ca(2+).

It localises to the periplasm. The catalysed reaction is 2 Fe(III)-[cytochrome cL] + a primary alcohol = 2 Fe(II)-[cytochrome cL] + an aldehyde + 2 H(+). Functionally, catalyzes the oxidation of primary alcohols including methanol. This is Methanol dehydrogenase [cytochrome c] subunit 1 (moxF) from Paracoccus denitrificans.